An 88-amino-acid polypeptide reads, in one-letter code: Exodeoxyribonuclease 7 small subunit (88 aa).

It belongs to the XseB family. Heterooligomer composed of large and small subunits.

The protein resides in the cytoplasm. It catalyses the reaction Exonucleolytic cleavage in either 5'- to 3'- or 3'- to 5'-direction to yield nucleoside 5'-phosphates.. Functionally, bidirectionally degrades single-stranded DNA into large acid-insoluble oligonucleotides, which are then degraded further into small acid-soluble oligonucleotides. This is Exodeoxyribonuclease 7 small subunit from Bordetella bronchiseptica (strain ATCC BAA-588 / NCTC 13252 / RB50) (Alcaligenes bronchisepticus).